The following is a 693-amino-acid chain: MSAREPAGRRRRASTRPRASPVADEPAGDGVGFMGYLRAVFRGDDDSELEALEEMAGDEPPVRRRREGPRARRRRASEAPPTSHRRASRQRPGPDAARSQSVRGRLDDDDEVPRGPPQARQGGYLGPVDARAILGRVGGSRVAPSPLFLEELQYEEDDYPEAVGPEDGGGARSPPKVEVLEGRVPGPELRAAFPLDRLAPQVAVWDESVRSALALGHPAGFYPCPDSAFGLSRVGVMHFASPDNPAVFFRQTLQQGEALAWYITGDGILDLTDRRTKTSPAQAMSFLADAVVRLAINGWVCGTRLHAEARGSDLDDRAAELRRQFASLTALRPVGAAAVPLLSAGGLVSPQSGPDAAVFRSSLGSLLYWPGVRALLDRDCRVAARYAGRMTYLATGALLARFNPDAVRCVLTREAAFLGRVLDVLAVMAEQTVQWLSVVVGARLHPHVHHPAFADVAREELFRALPLGSPAVVGAEHEALGDTAARRLLANSGLNAVLGAAVYALHTALATVTLKYARACGDAHRRRDDAAATRAILAAGLVLQRLLGFADTVVACVTLAAFDGGFTAPEVGTYTPLRYACVLRATQPLYARTTPAKFWADVRAAAEHVDLRPASSAPRAPVSGTADPAFLLKDLEPFPPAPVSGGSVLGPRVRVVDIMSQFRKLLMGDEGAAALRAHVSGRRATGLGGPPRP.

Disordered stretches follow at residues 1-32 and 48-126; these read MSAREPAGRRRRASTRPRASPVADEPAGDGVG and ELEA…GYLG. Positions 48–57 are enriched in acidic residues; it reads ELEALEEMAG. The interval 50–75 is RNA-binding; it reads EALEEMAGDEPPVRRRREGPRARRRR. Positions 63-75 match the Nuclear localization signal motif; sequence RRRREGPRARRRR. Over residues 63–75 the composition is skewed to basic residues; that stretch reads RRRREGPRARRRR. Positions 647-670 match the Nuclear export signal motif; it reads SVLGPRVRVVDIMSQFRKLLMGDE.

Belongs to the alphaherpesvirinae HHV-1 UL47 family. As to quaternary structure, interacts with US3 kinase. Interacts with UL31 and UL34; these interactions seem important for efficient virion nuclear egress. Interacts with UL41/VHS. Post-translationally, phosphorylated by US3. This phosphorylation is required for proper nuclear localization.

Its subcellular location is the virion tegument. It is found in the host nucleus. The protein resides in the host cytoplasm. Functionally, tegument protein that can bind to various RNA transcripts. Plays a role in the attenuation of selective viral and cellular mRNA degradation by modulating the activity of host shutoff RNase UL41/VHS. Also plays a role in the primary envelopment of virions in the perinuclear space, probably by interacting with two nuclear egress proteins UL31 and UL34. The chain is Tegument protein UL47 from Homo sapiens (Human).